We begin with the raw amino-acid sequence, 206 residues long: 2,3-bisphosphoglycerate-dependent phosphoglycerate mutase (206 aa).

Residues 9–16 (RHGQSEWN), 22–23 (TG), Arg-61, 88–91 (ERDY), Lys-99, 115–116 (RR), and 159–160 (GN) each bind substrate. Catalysis depends on His-10, which acts as the Tele-phosphohistidine intermediate. Glu-88 serves as the catalytic Proton donor/acceptor.

The protein belongs to the phosphoglycerate mutase family. BPG-dependent PGAM subfamily. In terms of assembly, homodimer.

The catalysed reaction is (2R)-2-phosphoglycerate = (2R)-3-phosphoglycerate. It functions in the pathway carbohydrate degradation; glycolysis; pyruvate from D-glyceraldehyde 3-phosphate: step 3/5. In terms of biological role, catalyzes the interconversion of 2-phosphoglycerate and 3-phosphoglycerate. This Brucella abortus (strain S19) protein is 2,3-bisphosphoglycerate-dependent phosphoglycerate mutase.